A 35-amino-acid chain; its full sequence is Cytochrome b6-f complex subunit 7 (35 aa).

The chain crosses the membrane as a helical span at residues Ala9–Leu27.

Belongs to the PetM family. As to quaternary structure, the 4 large subunits of the cytochrome b6-f complex are cytochrome b6, subunit IV (17 kDa polypeptide, PetD), cytochrome f and the Rieske protein, while the 4 small subunits are PetG, PetL, PetM and PetN. The complex functions as a dimer.

The protein resides in the cellular thylakoid membrane. Its function is as follows. Component of the cytochrome b6-f complex, which mediates electron transfer between photosystem II (PSII) and photosystem I (PSI), cyclic electron flow around PSI, and state transitions. The chain is Cytochrome b6-f complex subunit 7 from Synechococcus sp. (strain JA-3-3Ab) (Cyanobacteria bacterium Yellowstone A-Prime).